We begin with the raw amino-acid sequence, 79 residues long: RNA-binding protein Hfq (79 aa).

The 60-residue stretch at 10–69 folds into the Sm domain; the sequence is DPFLNALRKEHVPVSIYLVNGIKLQGNIESFDQYVVLLRNTVTQMVYKHAISTVVPARAV.

The protein belongs to the Hfq family. Homohexamer.

Functionally, RNA chaperone that binds small regulatory RNA (sRNAs) and mRNAs to facilitate mRNA translational regulation in response to envelope stress, environmental stress and changes in metabolite concentrations. Also binds with high specificity to tRNAs. The chain is RNA-binding protein Hfq from Ralstonia nicotianae (strain ATCC BAA-1114 / GMI1000) (Ralstonia solanacearum).